Reading from the N-terminus, the 121-residue chain is Small ribosomal subunit protein uS13 (121 aa).

The disordered stretch occupies residues 97–121 (VRGQRTRTNARTRRGARKTVAGKKK). Basic residues predominate over residues 100 to 121 (QRTRTNARTRRGARKTVAGKKK).

It belongs to the universal ribosomal protein uS13 family. In terms of assembly, part of the 30S ribosomal subunit. Forms a loose heterodimer with protein S19. Forms two bridges to the 50S subunit in the 70S ribosome.

Located at the top of the head of the 30S subunit, it contacts several helices of the 16S rRNA. In the 70S ribosome it contacts the 23S rRNA (bridge B1a) and protein L5 of the 50S subunit (bridge B1b), connecting the 2 subunits; these bridges are implicated in subunit movement. Contacts the tRNAs in the A and P-sites. The protein is Small ribosomal subunit protein uS13 of Prochlorococcus marinus (strain MIT 9303).